The chain runs to 342 residues: Terpene cyclase resF (342 aa).

Transmembrane regions (helical) follow at residues V5 to A25, F81 to F101, W115 to F135, S151 to F171, and I182 to L202. N224 carries N-linked (GlcNAc...) asparagine glycosylation. The next 3 helical transmembrane spans lie at Y229–G249, F269–L289, and Y305–L325.

The protein belongs to the membrane-bound ascI terpene cyclase family.

Its subcellular location is the membrane. It functions in the pathway antifungal biosynthesis. Its function is as follows. Cyclase; part of the gene cluster that mediates the biosynthesis of the tetrahydropyranyl antifungal agent restricticin that acts as an inhibitor of CYP51 and blocks the ergosterol biosynthesis. The highly reducing polyketide synthase resH, the short chain dehydrogenase resG, the cyclase resF, the FAD-dependent monooxygenase resA and the enoylreductase resD are required to generate the first stable intermediate desmethylrestrictinol. ResH with resD biosynthesize the first polyketide chain intermediate that is reduced by resG, followed by epoxidation by resA before 6-endo cyclization via epoxide opening by resF leads to desmethylrestrictinol. The methyltransferase resE then catalyzes the C4 O-methylation of desmethylrestrictinol to produce restrictinol, and the nonribosomal peptide synthetase resC catalyzes the C3 esterification of restrictinol with glycine that leads to restricticin. The protein is Terpene cyclase resF of Aspergillus sclerotiorum.